Reading from the N-terminus, the 433-residue chain is Enolase (433 aa).

The tract at residues 37 to 59 (RAAVPSGASTGEHEAVELRDGDK) is disordered. A compositionally biased stretch (basic and acidic residues) spans 47–59 (GEHEAVELRDGDK). Gln-166 serves as a coordination point for (2R)-2-phosphoglycerate. The active-site Proton donor is the Glu-208. Residues Asp-245, Glu-291, and Asp-318 each contribute to the Mg(2+) site. Lys-343, Arg-372, Ser-373, and Lys-394 together coordinate (2R)-2-phosphoglycerate. The active-site Proton acceptor is Lys-343.

The protein belongs to the enolase family. Requires Mg(2+) as cofactor.

The protein localises to the cytoplasm. It localises to the secreted. It is found in the cell surface. The enzyme catalyses (2R)-2-phosphoglycerate = phosphoenolpyruvate + H2O. It participates in carbohydrate degradation; glycolysis; pyruvate from D-glyceraldehyde 3-phosphate: step 4/5. Functionally, catalyzes the reversible conversion of 2-phosphoglycerate (2-PG) into phosphoenolpyruvate (PEP). It is essential for the degradation of carbohydrates via glycolysis. The polypeptide is Enolase (Leptospira biflexa serovar Patoc (strain Patoc 1 / Ames)).